The following is a 153-amino-acid chain: Ribonuclease H (153 aa).

The RNase H type-1 domain occupies 1 to 142 (MRKKIEIFTD…CDELARIAAE (142 aa)). Residues Asp10, Glu48, Asp70, and Asp134 each contribute to the Mg(2+) site.

It belongs to the RNase H family. As to quaternary structure, monomer. It depends on Mg(2+) as a cofactor.

It localises to the cytoplasm. The catalysed reaction is Endonucleolytic cleavage to 5'-phosphomonoester.. In terms of biological role, endonuclease that specifically degrades the RNA of RNA-DNA hybrids. This Baumannia cicadellinicola subsp. Homalodisca coagulata protein is Ribonuclease H.